Here is a 373-residue protein sequence, read N- to C-terminus: Muscleblind-like protein 2 (373 aa).

4 consecutive C3H1-type zinc fingers follow at residues 13-41, 47-73, 176-204, and 212-238; these read WLTLEVCRQFQRGTCSRSDEECKFAHPPK, NGRVIACFDSLKGRCSRENCKYLHPPT, TDKLEVCREFQRGNCARGETDCRFAHPAD, and DNTVTVCMDYIKGRCMREKCKYFHPPA.

Belongs to the muscleblind family. As to quaternary structure, interacts with ITGA3. In terms of tissue distribution, expressed in heart, brain, placenta, lung, liver, skeletal muscle, kidney and pancreas.

It is found in the nucleus. It localises to the cytoplasm. Functionally, mediates pre-mRNA alternative splicing regulation. Acts either as activator or repressor of splicing on specific pre-mRNA targets. Inhibits cardiac troponin-T (TNNT2) pre-mRNA exon inclusion but induces insulin receptor (IR) pre-mRNA exon inclusion in muscle. Antagonizes the alternative splicing activity pattern of CELF proteins. RNA-binding protein that binds to 5'ACACCC-3' core sequence, termed zipcode, within the 3'UTR of ITGA3. Binds to CUG triplet repeat expansion in myotonic dystrophy muscle cells by sequestering the target RNAs. Together with RNA binding proteins RBPMS and RBFOX2, activates vascular smooth muscle cells alternative splicing events. Regulates NCOR2 alternative splicing. Seems to regulate expression and localization of ITGA3 by transporting it from the nucleus to cytoplasm at adhesion plaques. May play a role in myotonic dystrophy pathophysiology (DM). This chain is Muscleblind-like protein 2 (MBNL2), found in Homo sapiens (Human).